A 143-amino-acid chain; its full sequence is Transcriptional regulator MraZ (143 aa).

SpoVT-AbrB domains are found at residues 5–47 (EYEH…PRGV) and 76–119 (AADM…SPRR).

The protein belongs to the MraZ family. In terms of assembly, forms oligomers.

Its subcellular location is the cytoplasm. It is found in the nucleoid. The chain is Transcriptional regulator MraZ from Roseiflexus castenholzii (strain DSM 13941 / HLO8).